Consider the following 207-residue polypeptide: MTSRKKVLLKVIILGDSGVGKTSLMNQYVNKKFSNQYKATIGADFLTKEVMVDDRLVTMQIWDTAGQERFQSLGVAFYRGADCCVLVFDVTAPNTFKTLDSWRDEFLIQASPRDPENFPFVVLGNKIDLENRQVTTKRAQAWCQSKNNIPYFETSAKEAINVEQAFQTIARNALKQETEVELYNEFPEPIKLDRNERAKPSAETCSC.

GTP contacts are provided by residues 15–22, 34–40, 63–67, 125–128, and 156–157; these read GDSGVGKT, SNQYKAT, DTAGQ, NKID, and AK. The short motif at 37-45 is the Effector region element; it reads YKATIGADF. 2 S-geranylgeranyl cysteine lipidation sites follow: Cys-205 and Cys-207. A Cysteine methyl ester modification is found at Cys-207.

The protein belongs to the small GTPase superfamily. Rab family. In terms of assembly, (Microbial infection) Interacts with Singapore grouper iridoviral proteins VP69 (ORF69) and VP101 (ORF101). As to expression, ubiquitously expressed. Expressed in liver, spleen, kidney, brain, intestine, heart, skin, muscle, gill and stomach.

The protein resides in the late endosome membrane. It localises to the lysosome membrane. Its function is as follows. Key regulator in endo-lysosomal trafficking. Governs early-to-late endosomal maturation, microtubule minus-end as well as plus-end directed endosomal migration and positioning, and endosome-lysosome transport through different protein-protein interaction cascades. Plays important roles in microbial pathogen infection and survival, as well as in participating in the life cycle of viruses. This chain is Ras-related protein rab7, found in Epinephelus coioides (Orange-spotted grouper).